The chain runs to 287 residues: Probable F-box protein At5g04010 (287 aa).

In terms of domain architecture, F-box; degenerate spans 50–101; sequence PSPPSWEILCLVGPYMDPESLAVASCVSTTWSKCFSSEDLWKSLPATRHSIF.

The protein is Probable F-box protein At5g04010 (NSFBx) of Arabidopsis thaliana (Mouse-ear cress).